A 677-amino-acid polypeptide reads, in one-letter code: DNA polymerase epsilon subunit B (677 aa).

Belongs to the DNA polymerase epsilon subunit B family. Heterotetramer. Consists of four subunits: POL2, DPB2, DPB3 and DPB4.

It is found in the nucleus. Functionally, as accessory component of the DNA polymerase epsilon (DNA polymerase II) participates in chromosomal DNA replication. In Eremothecium gossypii (strain ATCC 10895 / CBS 109.51 / FGSC 9923 / NRRL Y-1056) (Yeast), this protein is DNA polymerase epsilon subunit B (DPB2).